Reading from the N-terminus, the 557-residue chain is Probable serine/threonine-protein kinase WNK7 (557 aa).

Residues 28 to 285 (IRYKEVIGKG…AEELLLDSFL (258 aa)) enclose the Protein kinase domain. ATP is bound by residues 108–111 (TELF) and K158. Residue D175 is the Proton acceptor of the active site. Residues 451-477 (QNQSSKDNHQNGASSQAGESISHSLSS) show a composition bias toward polar residues. Residues 451 to 517 (QNQSSKDNHQ…EEEEDERLKE (67 aa)) are disordered. Phosphoserine is present on S505.

It belongs to the protein kinase superfamily. Ser/Thr protein kinase family. WNK subfamily.

The catalysed reaction is L-seryl-[protein] + ATP = O-phospho-L-seryl-[protein] + ADP + H(+). It catalyses the reaction L-threonyl-[protein] + ATP = O-phospho-L-threonyl-[protein] + ADP + H(+). Its function is as follows. May regulate flowering time by modulating the photoperiod pathway. This is Probable serine/threonine-protein kinase WNK7 (WNK7) from Arabidopsis thaliana (Mouse-ear cress).